Consider the following 489-residue polypeptide: RNA polymerase II subunit 5-mediating protein homolog (489 aa).

Disordered stretches follow at residues 141 to 188 (NSDE…MDEE), 200 to 329 (EEKE…EEDE), 396 to 415 (ILKT…SYNE), and 434 to 489 (FENQ…RQNK). Residues 157–168 (QKSTTTTTTTTT) are compositionally biased toward low complexity. 2 stretches are compositionally biased toward basic and acidic residues: residues 169 to 188 (SKDK…MDEE) and 215 to 224 (FNKKFNKKLD). Acidic residues-rich tracts occupy residues 227–265 (GSDE…EDEK), 276–298 (EEDD…EYYD), and 315–329 (QGDD…EEDE). Over residues 396 to 413 (ILKTNSSGNLMSTIPKSY) the composition is skewed to polar residues. Residues 480-489 (SRFKSSRQNK) are compositionally biased toward basic residues.

Belongs to the RNA polymerase II subunit 5-mediating protein family.

The protein resides in the nucleus. In Dictyostelium discoideum (Social amoeba), this protein is RNA polymerase II subunit 5-mediating protein homolog (rmp).